A 151-amino-acid chain; its full sequence is Deoxyuridine 5'-triphosphate nucleotidohydrolase (151 aa).

Substrate contacts are provided by residues 70–72, asparagine 83, and 87–89; these read RSG and VID.

The protein belongs to the dUTPase family. Mg(2+) serves as cofactor.

The enzyme catalyses dUTP + H2O = dUMP + diphosphate + H(+). The protein operates within pyrimidine metabolism; dUMP biosynthesis; dUMP from dCTP (dUTP route): step 2/2. Its function is as follows. This enzyme is involved in nucleotide metabolism: it produces dUMP, the immediate precursor of thymidine nucleotides and it decreases the intracellular concentration of dUTP so that uracil cannot be incorporated into DNA. This Desulfitobacterium hafniense (strain DSM 10664 / DCB-2) protein is Deoxyuridine 5'-triphosphate nucleotidohydrolase.